The primary structure comprises 673 residues: Metal-nicotianamine transporter YSL1 (673 aa).

A compositionally biased stretch (basic and acidic residues) spans 1–13 (MEIEQRRIMKREG). A disordered region spans residues 1–39 (MEIEQRRIMKREGEEEEDNNQLSLQEEEPDTEEEMSGRT). The segment covering 14–34 (EEEEDNNQLSLQEEEPDTEEE) has biased composition (acidic residues). Helical transmembrane passes span 46 to 66 (QITVRGVFVSIVIGVVFSVIA), 71 to 91 (LTTGIVPNLNSSAALLAFVFV), 119 to 139 (SAVACYGIAVGGGFASYLLGL), 163 to 183 (GLGWMTAYLFVVCFIGLFVLI), 225 to 245 (FMKYFSFSFLWGFFQWFFSGI), 260 to 280 (AWKQTFFFDFSMTFVGAGMIC), 283 to 303 (LVNLSLLLGAILSYGLMWPLL), 328 to 348 (VFLSVALILGDGLYTFVKILF), 392 to 412 (FAVSGYLTFAAVSTVVVPLIF), 420 to 440 (VIVAYIFAPSLAFCNAYGAGL), 442 to 462 (DINMAYNYGKIGLFVIAAVTG), 467 to 487 (VVAGLAGCGLIKSVVSVSCIL), 510 to 530 (IGTVVGCIVTPLSFFLFYKAF), 558 to 578 (FSALPLHCLQMCYGFFGFAVL), 604 to 624 (FLVGAYFAIDMCVGTLIVFVW), and 642 to 662 (GLICGEGLWTLPAAVLALAGV).

Belongs to the YSL (TC 2.A.67.2) family. As to expression, low levels of expression in leaves and shoots, but not detected in roots. Restricted to the vasculature, in the xylem parenchyma surrounding xylem tubes. Expressed in pollen grains, in the vasculature of petals and sepals, in the carpel veins, in the style underneath the stigmatic papillae, in the vascular tissue of the funiculus and in the chalazal endosperm.

It is found in the membrane. Involved in iron loading of the seeds. Acts probably as a transporter of iron- and metal-nicotianamine chelates. The chain is Metal-nicotianamine transporter YSL1 (YSL1) from Arabidopsis thaliana (Mouse-ear cress).